The chain runs to 328 residues: Cell cycle control protein 50A (328 aa).

The tract at residues 1 to 28 (MAMNYSAKDEVDGGPTGPPGGAAKTRRP) is disordered. The residue at position 2 (alanine 2) is an N-acetylalanine. Positions 2 to 48 (AMNYSAKDEVDGGPTGPPGGAAKTRRPDNTAFKQQRLPAWQPILTAG) are required for ATPase and aminophospholipid flippase activity. Over 2-49 (AMNYSAKDEVDGGPTGPPGGAAKTRRPDNTAFKQQRLPAWQPILTAGT) the chain is Cytoplasmic. The interaction with ATP8A2 stretch occupies residues 49-315 (TVLPTFFIIG…LGVVLLVINH (267 aa)). Residues 50–70 (VLPTFFIIGLIFIPIGIGIFV) traverse the membrane as a helical segment. The Exoplasmic loop portion of the chain corresponds to 71–292 (TSNNIREIEG…SWMGGKNPFL (222 aa)). Positions 102–125 (RDDSQLNGDPSALLNPSKECEPYR) are disordered. Residues cysteine 121 and cysteine 135 are joined by a disulfide bond. Residues asparagine 144 and asparagine 261 are each glycosylated (N-linked (GlcNAc...) asparagine). A helical transmembrane segment spans residues 293-313 (GIAYITIGSISFLLGVVLLVI). Residues 314–328 (NHKYRNSSNTADITI) lie on the Cytoplasmic side of the membrane.

It belongs to the CDC50/LEM3 family. Component of various P4-ATPase flippase complexes which consists of a catalytic alpha subunit and an accessory beta subunit. Interacts with ATP8A1 to form a flippase complex; this complex forms an intermediate phosphoenzyme. Interacts with ATP8A2 to form a flippase complex. TP8B1:TMEM30A and ATP8B2:TMEM30A flippase complexes have been shown to form intermediate phosphoenzymes in vitro. Interacts with alpha subunits ATP8A1, ATP8B1, ATP8B2, ATP8B4, ATP10A, ATP10B, ATP10D, ATP11A, ATP11B and ATP11C. In terms of processing, N-glycosylated. Contains high mannose-type oligosaccharides.

It localises to the membrane. The protein resides in the golgi apparatus. The protein localises to the cytoplasmic vesicle. Its subcellular location is the secretory vesicle membrane. It is found in the apical cell membrane. It localises to the photoreceptor inner segment. The protein resides in the cell projection. The protein localises to the cilium. Its subcellular location is the photoreceptor outer segment. Functionally, accessory component of a P4-ATPase flippase complex which catalyzes the hydrolysis of ATP coupled to the transport of aminophospholipids from the outer to the inner leaflet of various membranes and ensures the maintenance of asymmetric distribution of phospholipids. Phospholipid translocation also seems to be implicated in vesicle formation and in uptake of lipid signaling molecules. The beta subunit may assist in binding of the phospholipid substrate. Required for the proper folding, assembly and ER to Golgi exit of the ATP8A2:TMEM30A flippase complex. ATP8A2:TMEM30A may be involved in regulation of neurite outgrowth, and, reconstituted to liposomes, predomiminantly transports phosphatidylserine (PS) and to a lesser extent phosphatidylethanolamine (PE). The ATP8A1:TMEM30A flippase complex seems to play a role in regulation of cell migration probably involving flippase-mediated translocation of phosphatidylethanolamine (PE) at the plasma membrane. Required for the formation of the ATP8A2, ATP8B1 and ATP8B2 P-type ATPAse intermediate phosphoenzymes. Involved in uptake of platelet-activating factor (PAF). Can also mediate the export of alpha subunits ATP8A1, ATP8B1, ATP8B2, ATP8B4, ATP10A, ATP10B, ATP10D, ATP11A, ATP11B and ATP11C from ER to other membrane localizations. The polypeptide is Cell cycle control protein 50A (Rattus norvegicus (Rat)).